The following is a 428-amino-acid chain: Enolase (428 aa).

(2R)-2-phosphoglycerate is bound at residue glutamine 163. Catalysis depends on glutamate 205, which acts as the Proton donor. Residues aspartate 242, glutamate 286, and aspartate 313 each contribute to the Mg(2+) site. (2R)-2-phosphoglycerate is bound by residues lysine 338, arginine 367, serine 368, and lysine 389. The active-site Proton acceptor is lysine 338.

The protein belongs to the enolase family. Mg(2+) is required as a cofactor.

The protein resides in the cytoplasm. The protein localises to the secreted. Its subcellular location is the cell surface. It catalyses the reaction (2R)-2-phosphoglycerate = phosphoenolpyruvate + H2O. Its pathway is carbohydrate degradation; glycolysis; pyruvate from D-glyceraldehyde 3-phosphate: step 4/5. Functionally, catalyzes the reversible conversion of 2-phosphoglycerate (2-PG) into phosphoenolpyruvate (PEP). It is essential for the degradation of carbohydrates via glycolysis. This is Enolase from Verminephrobacter eiseniae (strain EF01-2).